Reading from the N-terminus, the 342-residue chain is Protein rough sheath 2 homolog (342 aa).

HTH myb-type domains lie at 1-58 and 59-113; these read MQPP…KNYL and RPGI…EKQQ. 2 DNA-binding regions (H-T-H motif) span residues 32 to 58 and 86 to 109; these read WSLV…KNYL and WKKI…EVFK. Positions 253 to 304 form a coiled coil; the sequence is RRREATEEFEAKMRALREEQAAAVERVEAEYREKMAGLRRDAEAKEQKMAEQ.

The protein localises to the nucleus. In terms of biological role, transcription factor required for normal cell differentiation. May interact with other proteins to repress the knox homeobox genes. The sequence is that of Protein rough sheath 2 homolog (RS2) from Oryza sativa subsp. japonica (Rice).